The chain runs to 75 residues: MMPVILPLLLSLAIRGGDGQAIQGDRDLIAKLFKRYQEHGLSVKRACHTCDDGTECCDSRCSCPWNTCTCIPWGK.

An N-terminal signal peptide occupies residues 1 to 19 (MMPVILPLLLSLAIRGGDG). The propeptide occupies 20–43 (QAIQGDRDLIAKLFKRYQEHGLSV). A Tryptophan amide modification is found at tryptophan 73.

The protein belongs to the conotoxin V superfamily. In terms of processing, contains 4 disulfide bonds. In terms of tissue distribution, expressed by the venom duct.

It is found in the secreted. The sequence is that of Conotoxin Vt15.1 from Conus planorbis (Planorbis cone).